An 83-amino-acid chain; its full sequence is Large ribosomal subunit protein eL43 (83 aa).

C38, C41, C56, and C59 together coordinate Zn(2+). A C4-type zinc finger spans residues 38 to 59 (CKKCGKKAVKRSGTGIWECRHC).

This sequence belongs to the eukaryotic ribosomal protein eL43 family. Putative zinc-binding subfamily. In terms of assembly, part of the 50S ribosomal subunit. The cofactor is Zn(2+).

Binds to the 23S rRNA. In Archaeoglobus fulgidus (strain ATCC 49558 / DSM 4304 / JCM 9628 / NBRC 100126 / VC-16), this protein is Large ribosomal subunit protein eL43.